The chain runs to 89 residues: UPF0367 protein PCC8801_1959 (89 aa).

It belongs to the UPF0367 family.

This Rippkaea orientalis (strain PCC 8801 / RF-1) (Cyanothece sp. (strain PCC 8801)) protein is UPF0367 protein PCC8801_1959.